A 232-amino-acid polypeptide reads, in one-letter code: Large ribosomal subunit protein uL1 (232 aa).

This sequence belongs to the universal ribosomal protein uL1 family. Part of the 50S ribosomal subunit.

Its function is as follows. Binds directly to 23S rRNA. The L1 stalk is quite mobile in the ribosome, and is involved in E site tRNA release. Protein L1 is also a translational repressor protein, it controls the translation of the L11 operon by binding to its mRNA. The chain is Large ribosomal subunit protein uL1 from Chlamydia trachomatis serovar L2 (strain ATCC VR-902B / DSM 19102 / 434/Bu).